Here is a 1873-residue protein sequence, read N- to C-terminus: Girdin (1873 aa).

The region spanning 12–132 (QFMTSPLVTW…KLLLLLLGCA (121 aa)) is the Calponin-homology (CH) domain. Residues 196 to 425 (HLRRLIDERD…EMAQKQSMDE (230 aa)) adopt a coiled-coil conformation. Residues S233, S237, and S449 each carry the phosphoserine modification. 2 coiled-coil regions span residues 458-1232 (TSSK…ESKN) and 1268-1385 (HKNL…KFYD). Disordered regions lie at residues 816-841 (ENKS…NKRL) and 1013-1034 (EERM…GRES). A Phosphoserine modification is found at S1020. S1387 carries the phosphoserine modification. The phosphoinositide-binding stretch occupies residues 1390 to 1408 (RRRGNWITLKMRKLIKSKK). Residues 1407–1416 (KKDINRERQK) are compositionally biased toward basic and acidic residues. Disordered stretches follow at residues 1407–1459 (KKDI…LGTK), 1560–1602 (TTSF…SNNN), and 1616–1643 (QSRP…GSSP). S1417 bears the Phosphoserine; by PKB/AKT1 mark. 4 stretches are compositionally biased toward polar residues: residues 1417–1430 (SLTL…SSEG), 1445–1459 (VGSN…LGTK), 1560–1579 (TTSF…STGS), and 1616–1626 (QSRPQSHSSGD). T1421 carries the phosphothreonine modification. The short motif at 1674 to 1704 (KAGSPGSEVVTLQQFLEESNKLTSIQLKSSS) is the GBA element. Phosphoserine is present on residues S1677, S1692, and S1719. The SH2-like; required for interaction with growth factor receptors stretch occupies residues 1715 to 1825 (SLSVSSDFLG…GTTRRTSIHD (111 aa)). The segment at 1738-1873 (SGKTPGDFYD…KSRSREQQSS (136 aa)) is disordered. Basic and acidic residues predominate over residues 1745-1755 (FYDRRTTKPEF). Y1767 is modified (phosphotyrosine). Composition is skewed to polar residues over residues 1768–1781 (TISS…STQG), 1789–1801 (TSVS…SNPY), and 1809–1820 (SVISTAEGTTRR). Phosphotyrosine is present on Y1801. Residues S1822 and S1839 each carry the phosphoserine modification. The segment covering 1822-1832 (SIHDFLSKDSR) has biased composition (basic and acidic residues). Over residues 1839–1852 (SSPPTAGSSSTTAS) the composition is skewed to low complexity. Basic and acidic residues predominate over residues 1858–1873 (QESRNSKSRSREQQSS).

It belongs to the CCDC88 family. Homodimer. Interacts (via GBA motif) with guanine nucleotide-binding protein G(i) alpha subunits GNAI1, GNAI2 and GNAI3. Also interacts (via GNA motif) with guanine nucleotide-binding protein G(s) alpha subunit GNAS. Interaction with G(i) alpha subunits occurs before interaction with GNAS and is regulated by phosphorylation; phosphorylation at Ser-1677 enhances binding to G(i) alpha subunits while phosphorylation at Ser-1692 abolishes G(i) alpha subunit binding, promoting binding to GNAS. Interacts (via C-terminal SH2-like region) with growth factor receptors EGFR, INSR and KDR/VEGFR2 (via their autophosphorylated cytoplasmic tails). Forms a complex with EGFR and GNAI3 which leads to enhanced EGFR signaling and triggering of cell migration; ligand stimulation is required for recruitment of GNAI3 to the complex. Interacts (tyrosine-phosphorylated form) with phosphatidylinositol 3-kinase (PI3K) regulatory subunit PIK3R1/p85a (via SH2 domains); the interaction enables recruitment of PIK3R1 to the EGFR receptor, enhancing PI3K activity and cell migration. Interacts with serine/threonine-protein kinase PRKCQ; the interaction leads to phosphorylation of CCDC88A and inhibition of its guanine nucleotide exchange factor activity. Interacts (via C-terminus) with DISC1; the interaction is direct. Interacts with AKT proteins; the interaction is inhibited in the presence of DISC1. Interacts with AKT1/PKB (via C-terminus). The non-phosphorylated form interacts with phosphatidylinositol 4-phosphate [Pi(4)P] and weakly with phosphatidylinositol 3-phosphate [Pi(3)P]. Interacts with microtubules. Interacts with actin. In terms of processing, phosphorylation is induced by epidermal growth factor (EGF) in a phosphoinositide 3-kinase (PI3K)-dependent manner. Phosphorylation by AKT1/PKB is necessary for the delocalization from the cell membrane and for cell migration. Phosphorylated on tyrosine residues which promotes binding to phosphatidylinositol 3-kinase (PI3K) regulatory subunit PIK3R1/p85a and enhances PI3K activity. Tyrosine-phosphorylated by both receptor and non-receptor tyrosine kinases in vitro. Tyrosine phosphorylation is required for AKT1-dependent phosphorylation of Ser-1417. Phosphorylation at Ser-1692 by PRKCQ disrupts interaction with GNAI3 and inhibits guanine nucleotide exchange factor activity. Expressed in the dentate gyrus, pyramidal cell layer of hippocampal regions CA1 and CA3 at postnatal 15. Expressed highly in neurons. Weakly in neuron progenitors (at protein level). Expressed in the dentate granule cell layer of the hippocampus. Expressed highly in the adult testis, moderately in the brain and at a low level in the spleen, lungs and fat.

Its subcellular location is the cell membrane. It is found in the cytoplasm. It localises to the cytosol. The protein localises to the cytoplasmic vesicle. The protein resides in the cell projection. Its subcellular location is the lamellipodium. It is found in the cytoskeleton. It localises to the cilium basal body. The protein localises to the microtubule organizing center. The protein resides in the centrosome. Its subcellular location is the centriole. Its function is as follows. Bifunctional modulator of guanine nucleotide-binding proteins (G proteins). Acts as a non-receptor guanine nucleotide exchange factor which binds to and activates guanine nucleotide-binding protein G(i) alpha subunits. Also acts as a guanine nucleotide dissociation inhibitor for guanine nucleotide-binding protein G(s) subunit alpha GNAS. Essential for cell migration. Interacts in complex with G(i) alpha subunits with the EGFR receptor, retaining EGFR at the cell membrane following ligand stimulation and promoting EGFR signaling which triggers cell migration. Binding to Gi-alpha subunits displaces the beta and gamma subunits from the heterotrimeric G-protein complex which enhances phosphoinositide 3-kinase (PI3K)-dependent phosphorylation and kinase activity of AKT1/PKB. Phosphorylation of AKT1/PKB induces the phosphorylation of downstream effectors GSK3 and FOXO1/FKHR, and regulates DNA replication and cell proliferation. Binds in its tyrosine-phosphorylated form to the phosphatidylinositol 3-kinase (PI3K) regulatory subunit PIK3R1 which enables recruitment of PIK3R1 to the EGFR receptor, enhancing PI3K activity and cell migration. Plays a role as a key modulator of the AKT-mTOR signaling pathway, controlling the tempo of the process of newborn neuron integration during adult neurogenesis, including correct neuron positioning, dendritic development and synapse formation. Inhibition of G(s) subunit alpha GNAS leads to reduced cellular levels of cAMP and suppression of cell proliferation. Essential for the integrity of the actin cytoskeleton. Required for formation of actin stress fibers and lamellipodia. May be involved in membrane sorting in the early endosome. Plays a role in ciliogenesis and cilium morphology and positioning and this may partly be through regulation of the localization of scaffolding protein CROCC/Rootletin. The chain is Girdin (Ccdc88a) from Mus musculus (Mouse).